The primary structure comprises 553 residues: MSKAAGGAAAAAAAAESCSPAPAGSSAAPPAPVEDLSKVSDEELLQWSKEELIRSLRRAEAEKVSAMLDHSNLIREVNRRLQLHLGEIRGLKDINQKLQEDNQELRDLCCFLDDDRQKGKRVSREWQRLGRYTAGVMHKEVALYLQKLKDLEVKQEEVVKENMELKELCVLLDEEKGAGCAGSRCSIDSQASLCQLTASTAPYVRDVGDGSSTSSTGSTDSPDHHKHHASSGSPEHLQKPRSEGSPEHSKHRSASPEHPQKPRACGTPDRPKALKGPSPEHHKPLCKGSPEQQRHPHPGSSPETLPKHVLSGSPEHFQKHRSGSSPEHARHSGGSPEHLQKHALGGSLEHLPRARGTSPEHLKQHYGGSPDHKHGGGSGGSGGSGGGSREGTLRRQAQEDGSPHHRNVYSGMNESTLSYVRQLEARVRQLEEENRMLPQASQNRRQPPTRNSSNMEKGWGSRARRVLQWWQGCRGIGRCLPTLPGSFRLSSGADGSNSSPNSAASFSGHATPSQQPEPVVHSLKVVWRKLGDAAGSCPGIRQHLSGNQYKGPM.

Low complexity predominate over residues Met-1–Ala-28. Residues Met-1–Ser-37 form a disordered region. 2 coiled-coil regions span residues Glu-43–Cys-109 and Met-137–Cys-169. 3 disordered regions span residues Tyr-203–Glu-414, Glu-433–Ser-461, and Ser-491–Pro-518. The segment covering Asp-209–Asp-220 has biased composition (low complexity). Positions His-236–Gln-260 are enriched in basic and acidic residues. Gly residues predominate over residues Gly-376–Arg-389. The span at Gly-391–Pro-403 shows a compositional bias: basic and acidic residues. Positions Met-412–Asn-443 form a coiled coil. Polar residues predominate over residues Gln-439–Met-455. Residues Ser-491–Gly-508 show a composition bias toward low complexity. Residue Arg-541 is modified to Asymmetric dimethylarginine.

Belongs to the CCDC85 family. May interact with ARVCF; CTNND1; CTNND2 and PKP4.

The protein localises to the cell junction. Its subcellular location is the adherens junction. May play a role in cell-cell adhesion and epithelium development through its interaction with proteins of the beta-catenin family. This is Coiled-coil domain-containing protein 85A (CCDC85A) from Homo sapiens (Human).